The following is a 1028-amino-acid chain: Contactin-6 (1028 aa).

An N-terminal signal peptide occupies residues Met1–Gly19. 6 Ig-like C2-type domains span residues Pro32 to Gln117, Glu122 to Gln208, Pro227 to Ala308, Pro318 to Arg402, Pro408 to Ile495, and Arg499 to Ser587. Intrachain disulfides connect Cys50–Cys100, Cys144–Cys196, Cys249–Cys297, Cys339–Cys386, Cys431–Cys479, and Cys521–Cys577. 2 N-linked (GlcNAc...) asparagine glycosylation sites follow: Asn65 and Asn193. Residues Asn368, Asn377, and Asn468 are each glycosylated (N-linked (GlcNAc...) asparagine). 4 Fibronectin type-III domains span residues Pro600–Ser698, Ala703–Asp800, Ala805–Ser901, and Pro902–Ser996. Residues Asn659, Asn765, Asn860, and Asn865 are each glycosylated (N-linked (GlcNAc...) asparagine). Tyr882 is modified (phosphotyrosine). The segment covering Thr887–Pro902 has biased composition (polar residues). The disordered stretch occupies residues Thr887–Ala908. Residues Asn895, Asn931, Asn956, and Asn957 are each glycosylated (N-linked (GlcNAc...) asparagine). Residue Ser999 is the site of GPI-anchor amidated serine attachment. Positions Val1000–Arg1028 are cleaved as a propeptide — removed in mature form.

The protein belongs to the immunoglobulin superfamily. Contactin family. Interacts with PTPRG. In terms of tissue distribution, specifically expressed in neuronal cells. In brain, it is expressed in spinal cord, cerebrum and cerebellum. At 17 dpc, it is expressed in hippocampus, cerebellum, and the brain stem. Strongly expressed after birth with a maximum level between P1 and P21, which corresponds to the time frame of oligodendrogliogenesis.

It localises to the cell membrane. Contactins mediate cell surface interactions during nervous system development. Participates in oligodendrocytes generation by acting as a ligand of NOTCH1. Its association with NOTCH1 promotes NOTCH1 activation through the released notch intracellular domain (NICD) and subsequent translocation to the nucleus. May be involved in motor coordination. In Rattus norvegicus (Rat), this protein is Contactin-6 (Cntn6).